Here is a 464-residue protein sequence, read N- to C-terminus: UDP-N-acetylmuramoylalanine--D-glutamate ligase (464 aa).

127-133 contributes to the ATP binding site; sequence GSNGKST.

This sequence belongs to the MurCDEF family.

The protein resides in the cytoplasm. The catalysed reaction is UDP-N-acetyl-alpha-D-muramoyl-L-alanine + D-glutamate + ATP = UDP-N-acetyl-alpha-D-muramoyl-L-alanyl-D-glutamate + ADP + phosphate + H(+). The protein operates within cell wall biogenesis; peptidoglycan biosynthesis. Its function is as follows. Cell wall formation. Catalyzes the addition of glutamate to the nucleotide precursor UDP-N-acetylmuramoyl-L-alanine (UMA). This Roseobacter denitrificans (strain ATCC 33942 / OCh 114) (Erythrobacter sp. (strain OCh 114)) protein is UDP-N-acetylmuramoylalanine--D-glutamate ligase.